Consider the following 288-residue polypeptide: MKIAVMTDSTSYLSQDLIDKYNIQIAPLSVTFDDGKNFTESNEIAIEEFYNKMASSQTIPTTSQPAIGEWITKYEMLRDQGYTDIIVICLSSGISGSYQSSYQAGEMVEGVNVHAFDSKLAAMIEGCYVLRAIEMVEEGYEPQQIIDDLTNMREHTGAYLIVDDLKNLQKSGRITGAQAWVGTLLKMKPVLKFEDGKIIPEEKVRTKKRAIQTLEKKVLDIVKDFEEVTLFVINGDHFEDGQALYKKLQDDCPSAYQVAYSEFGPVVAAHLGSGGLGLGYVGRKIRLT.

One can recognise a DegV domain in the interval I3–G282. Positions 62 and 95 each coordinate hexadecanoate.

May bind long-chain fatty acids, such as palmitate, and may play a role in lipid transport or fatty acid metabolism. This Staphylococcus aureus (strain MSSA476) protein is DegV domain-containing protein SAS0714.